The sequence spans 176 residues: Prepronociceptin (176 aa).

A signal peptide spans 1–19; sequence MKILFCDLLLLSLFSSVSS. Propeptides lie at residues 20 to 95 and 169 to 176; these read SCQK…MQHL and TLHQNGNA.

Belongs to the opioid neuropeptide precursor family. In terms of processing, specific enzymatic cleavages at paired basic residues probably yield other active peptides besides nociceptin. The N-terminal domain contains 6 conserved cysteines thought to be involved in disulfide bonding and/or processing.

The protein localises to the secreted. Its function is as follows. Ligand of the opioid receptor-like receptor OPRL1. It may act as a transmitter in the brain by modulating nociceptive and locomotor behavior. May be involved in neuronal differentiation and development. Blocks nociceptin action in pain transmission by inhibiting nociceptin-induced hyperalgesia and allodynia. In terms of biological role, has potent analgesic activity. This Bos taurus (Bovine) protein is Prepronociceptin (PNOC).